A 308-amino-acid chain; its full sequence is D-alanine--D-alanine ligase (308 aa).

Residues 108–303 (KLVWKAAGLP…YEALCLKVLE (196 aa)) enclose the ATP-grasp domain. 134–189 (EAELGLPMFVKPACEGSSLGVTKVRKAGELAQAYAEARKFDPLVLAEQFVGGGEYT) is an ATP binding site. Positions 257, 270, and 272 each coordinate Mg(2+).

This sequence belongs to the D-alanine--D-alanine ligase family. Mg(2+) serves as cofactor. Requires Mn(2+) as cofactor.

It is found in the cytoplasm. It carries out the reaction 2 D-alanine + ATP = D-alanyl-D-alanine + ADP + phosphate + H(+). It functions in the pathway cell wall biogenesis; peptidoglycan biosynthesis. In terms of biological role, cell wall formation. This Laribacter hongkongensis (strain HLHK9) protein is D-alanine--D-alanine ligase.